A 103-amino-acid polypeptide reads, in one-letter code: Large ribosomal subunit protein bL21 (103 aa).

The protein belongs to the bacterial ribosomal protein bL21 family. In terms of assembly, part of the 50S ribosomal subunit. Contacts protein L20.

In terms of biological role, this protein binds to 23S rRNA in the presence of protein L20. The chain is Large ribosomal subunit protein bL21 from Rhodococcus jostii (strain RHA1).